Consider the following 552-residue polypeptide: Eukaryotic translation initiation factor 3 subunit D (552 aa).

An RNA gate region spans residues 288–302 (DFDLLTVSETANEPP). A disordered region spans residues 525–552 (LPDGTFSSDEDEEEDDEDEEDEEEDEDN). The segment covering 532 to 552 (SDEDEEEDDEDEEDEEEDEDN) has biased composition (acidic residues).

It belongs to the eIF-3 subunit D family. In terms of assembly, component of the eukaryotic translation initiation factor 3 (eIF-3) complex, which is composed of 13 subunits: eif3a, eif3b, eif3c, eif3d, eif3e, eif3f, eif3g, eif3h, eif3i, eif3j, eif3k, eif3l and eif3m.

Its subcellular location is the cytoplasm. In terms of biological role, mRNA cap-binding component of the eukaryotic translation initiation factor 3 (eIF-3) complex, which is involved in protein synthesis of a specialized repertoire of mRNAs and, together with other initiation factors, stimulates binding of mRNA and methionyl-tRNAi to the 40S ribosome. The eIF-3 complex specifically targets and initiates translation of a subset of mRNAs involved in cell proliferation. In the eIF-3 complex, eif3d specifically recognizes and binds the 7-methylguanosine cap of a subset of mRNAs. In Danio rerio (Zebrafish), this protein is Eukaryotic translation initiation factor 3 subunit D (eif3d).